A 131-amino-acid chain; its full sequence is MIVGLGTDIVEIARIETRISEVVEKELQTNRLAKRVLTPSELDIFIKSSNPGRYLAKRFAAKEAAAKALGTGIGRGVSFQHIEISNNENGAPIVTFSAGAAERLAALGGVKGHLSIADEKHYATATVILES.

Residues D8 and E63 each contribute to the Mg(2+) site.

Belongs to the P-Pant transferase superfamily. AcpS family. Requires Mg(2+) as cofactor.

Its subcellular location is the cytoplasm. The catalysed reaction is apo-[ACP] + CoA = holo-[ACP] + adenosine 3',5'-bisphosphate + H(+). Its function is as follows. Transfers the 4'-phosphopantetheine moiety from coenzyme A to a Ser of acyl-carrier-protein. This chain is Holo-[acyl-carrier-protein] synthase, found in Shewanella piezotolerans (strain WP3 / JCM 13877).